A 424-amino-acid polypeptide reads, in one-letter code: Histidine--tRNA ligase (424 aa).

It belongs to the class-II aminoacyl-tRNA synthetase family. As to quaternary structure, homodimer.

The protein localises to the cytoplasm. It catalyses the reaction tRNA(His) + L-histidine + ATP = L-histidyl-tRNA(His) + AMP + diphosphate + H(+). This chain is Histidine--tRNA ligase, found in Salmonella paratyphi B (strain ATCC BAA-1250 / SPB7).